Consider the following 556-residue polypeptide: Probable glucomannan 4-beta-mannosyltransferase 3 (556 aa).

The helical transmembrane segment at 56 to 76 (IFVFIPILKCLVTICLVMSLL) threads the bilayer. The active site involves D159. Substrate is bound by residues D218 and D220. D312 is a catalytic residue. The next 4 membrane-spanning stretches (helical) occupy residues 391 to 411 (IVVH…TVLF), 428 to 448 (ITIL…FWIL), 509 to 529 (LVVG…GGSY), and 530 to 550 (FYVY…GYIG).

Belongs to the glycosyltransferase 2 family. Plant cellulose synthase-like A subfamily.

Its subcellular location is the golgi apparatus membrane. The enzyme catalyses GDP-mannose + (glucomannan)n = GDP + (glucomannan)n+1.. Probable mannan synthase which consists of a 4-beta-mannosyltransferase activity on mannan using GDP-mannose. The beta-1,4-mannan product is the backbone for galactomannan synthesis by galactomannan galactosyltransferase. Galactomannan is a noncellulosic polysaccharides of plant cell wall. The chain is Probable glucomannan 4-beta-mannosyltransferase 3 from Arabidopsis thaliana (Mouse-ear cress).